A 429-amino-acid polypeptide reads, in one-letter code: Gamma-glutamyl phosphate reductase (429 aa).

This sequence belongs to the gamma-glutamyl phosphate reductase family.

The protein resides in the cytoplasm. It carries out the reaction L-glutamate 5-semialdehyde + phosphate + NADP(+) = L-glutamyl 5-phosphate + NADPH + H(+). The protein operates within amino-acid biosynthesis; L-proline biosynthesis; L-glutamate 5-semialdehyde from L-glutamate: step 2/2. Catalyzes the NADPH-dependent reduction of L-glutamate 5-phosphate into L-glutamate 5-semialdehyde and phosphate. The product spontaneously undergoes cyclization to form 1-pyrroline-5-carboxylate. This chain is Gamma-glutamyl phosphate reductase, found in Nocardioides sp. (strain ATCC BAA-499 / JS614).